Here is a 1491-residue protein sequence, read N- to C-terminus: Chromosome partition protein MukB (1491 aa).

Residue 34-41 participates in ATP binding; the sequence is GGNGAGKS. Coiled coils occupy residues 302–418, 488–600, 638–666, 781–806, 836–1109, and 1210–1239; these read LIEQ…QYQQ, EVAR…RFES, ELEKAQSMAKDKLAERRAKLDSEIERLAS, RAAREQRLELLREERDDVVEQHAKAS, EQAL…DLRT, and VEAIEEMEVELARLTEELTQREQRLAISSD. The segment at 667–784 is flexible hinge; the sequence is PGGSNDPRLK…AIPLFGRAAR (118 aa). A disordered region spans residues 1059 to 1080; that stretch reads QRRRDELQERLHTSRSRKSEYE.

Belongs to the SMC family. MukB subfamily. In terms of assembly, homodimerization via its hinge domain. Binds to DNA via its C-terminal region. Interacts, and probably forms a ternary complex, with MukE and MukF via its C-terminal region. The complex formation is stimulated by calcium or magnesium. Interacts with tubulin-related protein FtsZ.

The protein localises to the cytoplasm. It localises to the nucleoid. Its function is as follows. Plays a central role in chromosome condensation, segregation and cell cycle progression. Functions as a homodimer, which is essential for chromosome partition. Involved in negative DNA supercoiling in vivo, and by this means organize and compact chromosomes. May achieve or facilitate chromosome segregation by condensation DNA from both sides of a centrally located replisome during cell division. This Vibrio cholerae serotype O1 (strain ATCC 39541 / Classical Ogawa 395 / O395) protein is Chromosome partition protein MukB.